The following is a 550-amino-acid chain: Keratin, type II cytoskeletal 74 (550 aa).

The segment at 1 to 140 (MSRQLNIKSG…DPEIQKVRAQ (140 aa)) is head. The interval 141 to 176 (EREQIMALNNKFASFIDKVRFLEQQNQVLGTKWELL) is coil 1A. An IF rod domain is found at 141–468 (EREQIMALNN…KLLEGEECWM (328 aa)). The interval 177-195 (QQMDLNNCRKNLEPILEGY) is linker 1. The tract at residues 196–287 (IGNLRKQLEM…CLYDAEVAQI (92 aa)) is coil 1B. The interval 288-311 (QTHTSETSVILSMDNNRYLDLDSI) is linker 12. The tract at residues 312–464 (IAEVRAQYED…ATYSKLLEGE (153 aa)) is coil 2. Positions 465–550 (ECWMSGENPS…VSSRARKAAR (86 aa)) are tail. The tract at residues 491–550 (HPGSSASTDLGASTMASTGTSSSSSTQSGQTRAKGARVGDPKDSQDKSTPVSSRARKAAR) is disordered. Residues 502–521 (ASTMASTGTSSSSSTQSGQT) are compositionally biased toward low complexity. Residues 527 to 536 (RVGDPKDSQD) show a composition bias toward basic and acidic residues.

The protein belongs to the intermediate filament family. Heterotetramer of two type I and two type II keratins.

Has a role in hair formation. Specific component of keratin intermediate filaments in the inner root sheath (IRS) of the hair follicle. This Bos taurus (Bovine) protein is Keratin, type II cytoskeletal 74 (KRT74).